Here is a 369-residue protein sequence, read N- to C-terminus: Aminomethyltransferase (369 aa).

This sequence belongs to the GcvT family. As to quaternary structure, the glycine cleavage system is composed of four proteins: P, T, L and H.

The enzyme catalyses N(6)-[(R)-S(8)-aminomethyldihydrolipoyl]-L-lysyl-[protein] + (6S)-5,6,7,8-tetrahydrofolate = N(6)-[(R)-dihydrolipoyl]-L-lysyl-[protein] + (6R)-5,10-methylene-5,6,7,8-tetrahydrofolate + NH4(+). The glycine cleavage system catalyzes the degradation of glycine. This Rippkaea orientalis (strain PCC 8801 / RF-1) (Cyanothece sp. (strain PCC 8801)) protein is Aminomethyltransferase.